A 296-amino-acid chain; its full sequence is MKFTIVLFTLISVTVAAAATTTTTAAANRIQNKAYAYYYCNSYCTQAVNDENSCGYYDTDVSNQEYYACLCTKSSYYNNLRSCDCFTKVVYYYSTSICSRANVGTYVGGRTSTTWGVSATKYRSSTSTSSLTRKSSSIGASPSIAIASSTKESSSTESSSSLEQSSSAGQSSSTEQSPSTEVSSSSSIEESSSNQDISSTDSITTISSDSSTGNTDSPTQGGGGNSGNNGSNGDGGNDASGGGGVVNENEQASSPPSSQSSTNSNQPNSSQTAPGAANYLSSVSVGTLMILVLGLI.

Residues 1 to 18 form the signal peptide; it reads MKFTIVLFTLISVTVAAA. Residues 146 to 212 are compositionally biased toward low complexity; sequence IASSTKESSS…ITTISSDSST (67 aa). Residues 146–276 are disordered; the sequence is IASSTKESSS…PNSSQTAPGA (131 aa). The span at 220–245 shows a compositional bias: gly residues; it reads QGGGGNSGNNGSNGDGGNDASGGGGV. Asn-229 and Asn-268 each carry an N-linked (GlcNAc...) asparagine glycan. The segment covering 247-274 has biased composition (low complexity); sequence NENEQASSPPSSQSSTNSNQPNSSQTAP. The GPI-anchor amidated glycine moiety is linked to residue Gly-275. Residues 276 to 296 constitute a propeptide, removed in mature form; that stretch reads AANYLSSVSVGTLMILVLGLI.

This sequence belongs to the IHD1 family. The GPI-anchor is attached to the protein in the endoplasmic reticulum and serves to target the protein to the cell surface. There, the glucosamine-inositol phospholipid moiety is cleaved off and the GPI-modified mannoprotein is covalently attached via its lipidless GPI glycan remnant to the 1,6-beta-glucan of the outer cell wall layer.

It is found in the secreted. The protein localises to the cell wall. Its subcellular location is the membrane. Functionally, probable GPI-anchored cell wall protein that may be involved in cell wall organization, hyphal growth, as well as in virulence. The sequence is that of Probable cell wall protein PGA41 (PGA41) from Candida albicans (strain SC5314 / ATCC MYA-2876) (Yeast).